A 213-amino-acid polypeptide reads, in one-letter code: Protein big brother (213 aa).

This sequence belongs to the CBF-beta family.

The protein resides in the nucleus. Its function is as follows. Regulates the DNA-binding properties of Runt. This chain is Protein big brother (Bgb), found in Drosophila melanogaster (Fruit fly).